Here is a 225-residue protein sequence, read N- to C-terminus: Uracil-DNA glycosylase (225 aa).

Asp67 serves as the catalytic Proton acceptor.

This sequence belongs to the uracil-DNA glycosylase (UDG) superfamily. UNG family.

Its subcellular location is the cytoplasm. It carries out the reaction Hydrolyzes single-stranded DNA or mismatched double-stranded DNA and polynucleotides, releasing free uracil.. Excises uracil residues from the DNA which can arise as a result of misincorporation of dUMP residues by DNA polymerase or due to deamination of cytosine. This Coxiella burnetii (strain Dugway 5J108-111) protein is Uracil-DNA glycosylase.